Here is a 291-residue protein sequence, read N- to C-terminus: Potassium-transporting ATPase subunit beta (291 aa).

Topologically, residues 1–36 (MAALQEKKSCSQRMEEFRHYCWNPDTGQMLGRTLSR) are cytoplasmic. A helical; Signal-anchor for type II membrane protein transmembrane segment spans residues 37 to 57 (WVWISLYYVAFYVVMTGLFAL). The Extracellular segment spans residues 58 to 291 (CIYVLMQTID…KVEFKLKIQK (234 aa)). N-linked (GlcNAc...) asparagine glycosylation is found at asparagine 99, asparagine 103, asparagine 130, asparagine 146, and asparagine 161. An intrachain disulfide couples cysteine 131 to cysteine 152. Cysteine 162 and cysteine 178 are joined by a disulfide. N-linked (GlcNAc...) asparagine glycosylation is found at asparagine 193 and asparagine 222. An immunoglobulin-like region spans residues 194–291 (STPPRVDCTF…KVEFKLKIQK (98 aa)). A disulfide bridge connects residues cysteine 201 and cysteine 263.

It belongs to the X(+)/potassium ATPases subunit beta family. The ATPase pump is composed of two subunits: alpha (catalytic) and beta (regulatory). Interacts with alpha subunit ATP12A; this interaction is required for the formation of a functionally active pump and targeting at the plasma membrane. Interacts (via N-terminus) with alpha subunit ATP4A (via the P-domain). N-glycosylation is necessary for assembly and functional expression of the pump at the plasma membrane.

The protein localises to the apical cell membrane. The protein resides in the cell membrane. Its function is as follows. The beta subunit of the gastric H(+)/K(+) ATPase pump which transports H(+) ions in exchange for K(+) ions across the apical membrane of parietal cells. Plays a structural and regulatory role in the assembly and membrane targeting of a functionally active pump. Within a transport cycle, the transfer of a H(+) ion across the membrane is coupled to ATP hydrolysis and is associated with a transient phosphorylation of the alpha subunit that shifts the pump conformation from inward-facing (E1) to outward-facing state (E2). Interacts with the phosphorylation domain of the alpha subunit and functions as a ratchet, stabilizing the lumenal-open E2 conformation and preventing the reverse reaction of the transport cycle. The sequence is that of Potassium-transporting ATPase subunit beta (ATP4B) from Oryctolagus cuniculus (Rabbit).